Consider the following 47-residue polypeptide: Protein PsbN (47 aa).

The helical transmembrane segment at 7 to 29 threads the bilayer; the sequence is VAISISCLLISFTGYALYTAFGN.

The protein belongs to the PsbN family.

Its subcellular location is the plastid membrane. Its function is as follows. May play a role in photosystem I and II biogenesis. The polypeptide is Protein PsbN (Aneura mirabilis (Parasitic liverwort)).